Consider the following 449-residue polypeptide: CCAAT/enhancer-binding protein (449 aa).

3 disordered regions span residues His211–Glu233, Gly276–Gln302, and Ser334–Val386. Composition is skewed to low complexity over residues Asn215–Ser229, Asn280–Ser301, and Gln339–Gln349. Over residues Lys357–Arg368 the composition is skewed to basic and acidic residues. Positions Thr363–Leu426 constitute a bZIP domain. The interval Arg367 to Lys396 is basic motif. The segment at Leu398 to Leu405 is leucine-zipper.

This sequence belongs to the bZIP family. C/EBP subfamily. In terms of assembly, binds DNA as a dimer and can form stable heterodimers. Interacts with trbl. Ubiquitination/deubiquitination regulates border cell migration. Ubiquitination is stimulated by trbl, which leads to proteasomal degradation and inhibits border cell migration. Deubiquitination by Usp47, leads to its stabilization and promotes border cell migration.

It localises to the nucleus. Its function is as follows. Required for the expression of gene products mediating border cell migration. Among the DNA sequences that this protein binds with high affinity is a conserved site within the promoter of its gene. This is CCAAT/enhancer-binding protein (slbo) from Drosophila melanogaster (Fruit fly).